The following is a 323-amino-acid chain: Probable inactive poly [ADP-ribose] polymerase SRO2 (323 aa).

The PARP catalytic domain maps to 31 to 257; it reads SSVSHAGSSF…FASRPSSPWV (227 aa). Residues 250–321 enclose the RST domain; sequence SRPSSPWVSF…IKNHKNRNKV (72 aa).

Interacts with STO.

The protein resides in the nucleus. Its function is as follows. Probable inactive ADP-ribosyltransferase that may be involved in stress and developmental responses. The protein is Probable inactive poly [ADP-ribose] polymerase SRO2 (SRO2) of Arabidopsis thaliana (Mouse-ear cress).